Here is a 516-residue protein sequence, read N- to C-terminus: Multicopper oxidase CueO (516 aa).

A signal peptide (tat-type signal) is located at residues 1-28 (MQRRDFLKYSVALGVASALPLWSRAVFA). Plastocyanin-like domains lie at 55 to 165 (GQST…IEDD) and 227 to 292 (PRGW…DNKP). Cu cation contacts are provided by histidine 101, histidine 103, histidine 141, and histidine 143. The segment at 355–400 (MDPMLDMMGMQMLMEKYGDQAMAGMDHSQMMGHMGHGNMNHMNHGG) is methionine-rich region. In terms of domain architecture, Plastocyanin-like 3 spans 402–516 (FDFHHANKIN…DTGMMLGFTV (115 aa)). Histidine 443, histidine 446, histidine 448, histidine 499, cysteine 500, histidine 501, and histidine 505 together coordinate Cu cation.

It belongs to the multicopper oxidase family. In terms of assembly, monomer. Cu cation serves as cofactor. Post-translationally, exported by the Tat system. The position of the signal peptide cleavage has been experimentally proven.

The protein localises to the periplasm. It carries out the reaction 4 Cu(+) + O2 + 4 H(+) = 4 Cu(2+) + 2 H2O. Ferroxidase and phenoloxidase activities are enhanced considerably in the presence of excess copper ions. A labile regulatory copper ion near the T1 copper site is important for the copper associated activation of enzyme activity. Ag(+) acts as a potent inhibitor of oxidase activity by binding at Cu(+) binding sites, blocking Cu(+) substrate binding and oxidation. pPD oxidase activity is strongly inhibited by sodium azide, an inhibitor of the electron transfer. Multicopper oxidase involved in copper homeostasis and copper tolerance under aerobic conditions. Is responsible for the oxidation of Cu(+) to the less harmful Cu(2+) in the periplasm, thereby preventing Cu(+) from entering the cytoplasm. Probably primarily functions as a cuprous oxidase in vivo. Its function is as follows. In vitro, in the presence of excess copper ions, exhibits ferroxidase and phenoloxidase activities. Fe(2+) is an excellent substrate in the presence of excess Cu(2+), but is inactive in the absence of Cu(2+). Oxidizes the phenolate iron siderophores enterobactin, 2,3-dihydroxybenzoate (2,3-DHB) and 3-hydroxyanthranilate (3-HAA). Oxidation and thus inactivation of enterobactin could protect cells from the interaction of enterobactin with copper and play a central role as an interface between copper detoxification and iron homeostasis. Also oxidizes a variety of phenolic model substrates, including 2,2'-azinobis(3-ethylbenzthiazolinesulfonic acid) (ABTS), p-phenylenediamine (pPD), 2,6-dimethoxyphenol (2,6-DMP) and 3,4-dihydroxybenzoic acid (3,4-DHB). In Escherichia coli (strain K12), this protein is Multicopper oxidase CueO.